Consider the following 82-residue polypeptide: RNA-binding protein Hfq (82 aa).

The region spanning Asp11–Ile71 is the Sm domain.

Belongs to the Hfq family. Homohexamer.

Its function is as follows. RNA chaperone that binds small regulatory RNA (sRNAs) and mRNAs to facilitate mRNA translational regulation in response to envelope stress, environmental stress and changes in metabolite concentrations. Also binds with high specificity to tRNAs. The protein is RNA-binding protein Hfq of Bradyrhizobium diazoefficiens (strain JCM 10833 / BCRC 13528 / IAM 13628 / NBRC 14792 / USDA 110).